The chain runs to 883 residues: Translation initiation factor IF-2 (883 aa).

Disordered stretches follow at residues 53-90 and 171-294; these read RSHG…GRSK and EEAA…FERP. Positions 81-90 are enriched in polar residues; it reads EVTVNSGRSK. The span at 172-185 shows a compositional bias: low complexity; it reads EAAAAAKAAEALAA. Residues 221–238 are compositionally biased toward basic and acidic residues; the sequence is RSDDRNNRSAPRNERGPG. A compositionally biased stretch (low complexity) spans 256 to 265; that stretch reads GNSNNSNNRG. One can recognise a tr-type G domain in the interval 382–551; that stretch reads QRPPVVTIMG…SVQAELLELK (170 aa). The G1 stretch occupies residues 391–398; sequence GHVDHGKT. 391-398 is a GTP binding site; it reads GHVDHGKT. Positions 416–420 are G2; sequence GITQH. Residues 437-440 are G3; that stretch reads DTPG. GTP contacts are provided by residues 437–441 and 491–494; these read DTPGH and NKID. The interval 491-494 is G4; sequence NKID. A G5 region spans residues 527–529; the sequence is SAK.

This sequence belongs to the TRAFAC class translation factor GTPase superfamily. Classic translation factor GTPase family. IF-2 subfamily.

The protein localises to the cytoplasm. In terms of biological role, one of the essential components for the initiation of protein synthesis. Protects formylmethionyl-tRNA from spontaneous hydrolysis and promotes its binding to the 30S ribosomal subunits. Also involved in the hydrolysis of GTP during the formation of the 70S ribosomal complex. In Stenotrophomonas maltophilia (strain R551-3), this protein is Translation initiation factor IF-2.